The following is a 334-amino-acid chain: SH3 and cysteine-rich domain-containing protein 3 (334 aa).

A disordered region spans residues 1–26 (MAQYDQLEDKDSLDIHDNPPAPENVV). A compositionally biased stretch (basic and acidic residues) spans 7–17 (LEDKDSLDIHD). Residues 62-113 (PHKFKDHYCKKPKFCDVCARMIVLNNKFALRCKNCKTNIHHSCQSYVQFQRC) form a Phorbol-ester/DAG-type zinc finger. A compositionally biased stretch (acidic residues) spans 178–190 (EEEAQQPKEDEEG). The interval 178 to 215 (EEEAQQPKEDEEGAEGKQDGDKKDKTATDDKNKKQQQT) is disordered. The segment covering 191–210 (AEGKQDGDKKDKTATDDKNK) has biased composition (basic and acidic residues). SH3 domains lie at 217–276 (SQSH…RVRA) and 277–334 (GERV…LHEL).

As to quaternary structure, component of a calcium channel complex with CACNA1S. As to expression, expressed in muscles at the muscle triad.

The protein resides in the cytoplasm. Its subcellular location is the cell membrane. It localises to the sarcolemma. The protein localises to the T-tubule. Required for normal excitation-contraction coupling in skeletal muscle and for normal muscle contraction in response to membrane depolarization. Required for normal Ca(2+) release from the sarcplasmic reticulum, which ultimately leads to muscle contraction. Probably functions via its effects on muscle calcium channels. Increases CACNA1S channel activity, in addition to its role in enhancing the expression of CACNA1S at the cell membrane. Has a redundant role in promoting the expression of the calcium channel CACNA1S at the cell membrane. The polypeptide is SH3 and cysteine-rich domain-containing protein 3 (Danio rerio (Zebrafish)).